A 717-amino-acid chain; its full sequence is UvrABC system protein C (717 aa).

Residues D16 to V95 enclose the GIY-YIG domain. The UVR domain occupies D208–A243. 2 disordered regions span residues T517–R555 and H696–Q717. Composition is skewed to basic and acidic residues over residues E541–R553 and E707–Q717.

It belongs to the UvrC family. In terms of assembly, interacts with UvrB in an incision complex.

The protein localises to the cytoplasm. Its function is as follows. The UvrABC repair system catalyzes the recognition and processing of DNA lesions. UvrC both incises the 5' and 3' sides of the lesion. The N-terminal half is responsible for the 3' incision and the C-terminal half is responsible for the 5' incision. In Saccharopolyspora erythraea (strain ATCC 11635 / DSM 40517 / JCM 4748 / NBRC 13426 / NCIMB 8594 / NRRL 2338), this protein is UvrABC system protein C.